The following is an 86-amino-acid chain: RNA-binding protein Hfq (86 aa).

The region spanning 9 to 68 (DPYLNTLRKEKVGVSIYLVNGIKLQGTIESFDQFVILLKNTVSQMVYKHAISTVVPVRPI) is the Sm domain.

Belongs to the Hfq family. Homohexamer.

Functionally, RNA chaperone that binds small regulatory RNA (sRNAs) and mRNAs to facilitate mRNA translational regulation in response to envelope stress, environmental stress and changes in metabolite concentrations. Also binds with high specificity to tRNAs. This Pseudomonas savastanoi pv. phaseolicola (strain 1448A / Race 6) (Pseudomonas syringae pv. phaseolicola (strain 1448A / Race 6)) protein is RNA-binding protein Hfq.